The sequence spans 436 residues: MTKQPFYKSLYVQVLVAIAIGIALGHWYPETAVAMKPFGDGFVKLIKMAIAPIIFCTVVTGIAGMQSMKSVGKTGGMALLYFEIVSTVALIIGLVVVNLVQPGAGMHVDPNTLDTSKIAAYAAAGEKQSTVDFLMNVIPGTVVGAFANGDILQVLFFSVLFGYALHRLGSYGKPVFEFIERVSHVMFNIINVIMKVAPIGAFGAMAFTIGAYGVGSLVQLGQLMLCFYITCLLFVLIVLGGIARAHGFSILRFIRYIREELLIVLGTSSSESALPRMIDKMEKLGCNKSVVGLVIPTGYSFNLDGTSIYLTMAAVFIAQATDTPMDITHQITLLLVLLIASKGAAGVTGSGFIVLAATLSAVGHLPVAGLALILGIDRFMSEARALTNLVGNGVATVVVSKWCKQLDEGTLQRELAGEGNASSPASDIPVGGREAV.

A run of 9 helical transmembrane segments spans residues 14 to 34 (VLVA…TAVA), 45 to 65 (LIKM…IAGM), 77 to 97 (MALL…LVVV), 142 to 162 (VVGA…VLFG), 198 to 218 (PIGA…GSLV), 223 to 243 (LMLC…GGIA), 290 to 310 (VVGL…SIYL), 331 to 351 (ITLL…TGSG), and 353 to 373 (IVLA…LALI). Positions 414–436 (ELAGEGNASSPASDIPVGGREAV) are disordered.

The protein belongs to the dicarboxylate/amino acid:cation symporter (DAACS) (TC 2.A.23) family.

It is found in the cell inner membrane. In terms of biological role, responsible for the transport of dicarboxylates such as succinate, fumarate, and malate from the periplasm across the membrane. The protein is C4-dicarboxylate transport protein 2 of Pseudomonas paraeruginosa (strain DSM 24068 / PA7) (Pseudomonas aeruginosa (strain PA7)).